The sequence spans 326 residues: Isopenicillin N synthase (326 aa).

3 residues coordinate isopenicillin N: Arg-84, Tyr-88, and Tyr-186. N-[(5S)-5-amino-5-carboxypentanoyl]-L-cysteinyl-D-valine contacts are provided by Arg-84, Tyr-88, Tyr-186, His-209, and Asp-211. The region spanning 183 to 283 is the Fe2OG dioxygenase domain; the sequence is LIRYPFLENY…RLSIPFFANL (101 aa). Fe(2+) is bound by residues His-209, Asp-211, and His-265. Residue Arg-274 coordinates 2-oxoglutarate. Position 276 (Ser-276) interacts with isopenicillin N. Ser-276 serves as a coordination point for N-[(5S)-5-amino-5-carboxypentanoyl]-L-cysteinyl-D-valine.

This sequence belongs to the iron/ascorbate-dependent oxidoreductase family. The cofactor is Fe cation. L-ascorbate serves as cofactor.

The catalysed reaction is N-[(5S)-5-amino-5-carboxypentanoyl]-L-cysteinyl-D-valine + O2 = isopenicillin N + 2 H2O. It participates in antibiotic biosynthesis; penicillin G biosynthesis; penicillin G from L-alpha-aminoadipate and L-cysteine and L-valine: step 2/3. Its function is as follows. Removes, in the presence of oxygen, 4 hydrogen atoms from delta-L-(alpha-aminoadipyl)-L-cysteinyl-D-valine (ACV) to form the azetidinone and thiazolidine rings of isopenicillin. This is Isopenicillin N synthase (pcbC) from Lysobacter lactamgenus.